We begin with the raw amino-acid sequence, 152 residues long: Deoxyuridine 5'-triphosphate nucleotidohydrolase (152 aa).

Residues 71-73 (RSG), Asn-84, 88-90 (LVD), and Met-98 contribute to the substrate site.

The protein belongs to the dUTPase family. Requires Mg(2+) as cofactor.

The enzyme catalyses dUTP + H2O = dUMP + diphosphate + H(+). It functions in the pathway pyrimidine metabolism; dUMP biosynthesis; dUMP from dCTP (dUTP route): step 2/2. In terms of biological role, this enzyme is involved in nucleotide metabolism: it produces dUMP, the immediate precursor of thymidine nucleotides and it decreases the intracellular concentration of dUTP so that uracil cannot be incorporated into DNA. This Shewanella oneidensis (strain ATCC 700550 / JCM 31522 / CIP 106686 / LMG 19005 / NCIMB 14063 / MR-1) protein is Deoxyuridine 5'-triphosphate nucleotidohydrolase.